A 326-amino-acid chain; its full sequence is Vitamin B12 import system permease protein BtuC (326 aa).

The next 9 membrane-spanning stretches (helical) occupy residues 15-35 (WLLS…CAGE), 61-81 (LAVL…QALF), 88-108 (PGLL…VLLG), 112-132 (LPGW…TLIL), 146-166 (LLAG…AIYF), 184-204 (GGVD…LIWI), 240-260 (GWMV…GLVI), 274-294 (VLLP…DVVA), and 302-322 (ELPI…WLLL).

It belongs to the binding-protein-dependent transport system permease family. FecCD subfamily. As to quaternary structure, the complex is composed of two ATP-binding proteins (BtuD), two transmembrane proteins (BtuC) and a solute-binding protein (BtuF).

The protein localises to the cell inner membrane. Its function is as follows. Part of the ABC transporter complex BtuCDF involved in vitamin B12 import. Involved in the translocation of the substrate across the membrane. The sequence is that of Vitamin B12 import system permease protein BtuC from Salmonella agona (strain SL483).